The sequence spans 258 residues: Protein CHAPERONE-LIKE PROTEIN OF POR1, chloroplastic (258 aa).

The N-terminal 48 residues, 1 to 48 (MSSSLLLSGSTVSSSFIAPSKPSLVRNSSKTSLLPFRNVSRSFKTVKC), are a transit peptide targeting the chloroplast. Position 49 is an N-acetylthreonine (T49). A J-like domain required for holdase chaperone activity region spans residues 67–122 (WDPYKRLGVSPYASEEEIWASRNFLLQQYAGHERSEESIEGAFEKLLMSSFIRRKK). 3 helical membrane passes run 162 to 182 (FLFAFMGGWSIMNSAEGGPAF), 207 to 227 (LIGIGALVAGWFCGSLIIPMI), and 237 to 257 (TLELLTSLVAYVFLFLSCTFL).

The protein belongs to the chaperone-like protein of POR1 protein family. Interacts with PORB in chloroplast. Interacts with PORA during plastid import. Expressed ubiquitously with higher levels in young leaves, flowers, and the root elongation zone.

The protein resides in the mitochondrion membrane. The protein localises to the plastid. Its subcellular location is the chloroplast envelope. It is found in the chloroplast thylakoid membrane. Essential protein required during embryogenesis. Exhibits holdase chaperone activity involved in the stabilization of NADPH:protochlorophyllide oxidoreductase (POR) proteins against photooxidative stress during POR proteins import into chloroplasts. Required for chloroplast biogenesis and development. When expressed in yeast, triggers mitochondria-mediated cell death associated with the loss of mitochondrial membrane potential. The protein is Protein CHAPERONE-LIKE PROTEIN OF POR1, chloroplastic of Arabidopsis thaliana (Mouse-ear cress).